We begin with the raw amino-acid sequence, 133 residues long: Small ribosomal subunit protein uS9 (133 aa).

The interval 114-133 (VERKKYGKKKARRSPQFSKR) is disordered. Residues 118 to 133 (KYGKKKARRSPQFSKR) show a composition bias toward basic residues.

This sequence belongs to the universal ribosomal protein uS9 family.

This Fusobacterium nucleatum subsp. nucleatum (strain ATCC 25586 / DSM 15643 / BCRC 10681 / CIP 101130 / JCM 8532 / KCTC 2640 / LMG 13131 / VPI 4355) protein is Small ribosomal subunit protein uS9.